Reading from the N-terminus, the 34-residue chain is Photosystem II reaction center protein Psb30 (34 aa).

The helical transmembrane segment at 6–26 (VVFQLMALFFVLAAGPAVVVL) threads the bilayer.

This sequence belongs to the Psb30/Ycf12 family. In terms of assembly, PSII is composed of 1 copy each of membrane proteins PsbA, PsbB, PsbC, PsbD, PsbE, PsbF, PsbH, PsbI, PsbJ, PsbK, PsbL, PsbM, PsbT, PsbX, PsbY, PsbZ, Psb30/Ycf12, peripheral proteins of the oxygen-evolving complex and a large number of cofactors. It forms dimeric complexes.

It is found in the plastid. It localises to the chloroplast thylakoid membrane. Its function is as follows. A core subunit of photosystem II (PSII), probably helps stabilize the reaction center. The chain is Photosystem II reaction center protein Psb30 from Stigeoclonium helveticum (Green alga).